Reading from the N-terminus, the 347-residue chain is Eukaryotic translation initiation factor 3 subunit I (347 aa).

WD repeat units follow at residues 8-47, 50-89, 91-135, 151-190, 193-232, and 290-329; these read GHER…RLGT, GHTG…VIHT, TAPV…VTKE, ENHK…FITS, LHTQ…QLKS, and GHFG…FDFK.

The protein belongs to the eIF-3 subunit I family. In terms of assembly, component of the eukaryotic translation initiation factor 3 (eIF-3) complex.

It localises to the cytoplasm. Its function is as follows. Component of the eukaryotic translation initiation factor 3 (eIF-3) complex, which is involved in protein synthesis of a specialized repertoire of mRNAs and, together with other initiation factors, stimulates binding of mRNA and methionyl-tRNAi to the 40S ribosome. The eIF-3 complex specifically targets and initiates translation of a subset of mRNAs involved in cell proliferation. This Vanderwaltozyma polyspora (strain ATCC 22028 / DSM 70294 / BCRC 21397 / CBS 2163 / NBRC 10782 / NRRL Y-8283 / UCD 57-17) (Kluyveromyces polysporus) protein is Eukaryotic translation initiation factor 3 subunit I.